Consider the following 2202-residue polypeptide: Nonribosomal peptide synthetase 5 (2202 aa).

The interval 58–443 is adenylation 1; sequence TYAQLDALSD…LLSYDKVDSA (386 aa). The Carrier 1 domain occupies 517-593; the sequence is ERGLGAVESV…NIAAAVVELS (77 aa). Position 554 is an O-(pantetheine 4'-phosphoryl)serine (S554). The interval 625 to 918 is condensation 1; it reads IAPMTDMQTR…INTLPLAINT (294 aa). The segment at 1105–1482 is adenylation 2; it reads TYREFGRMTE…EVQSTISKLA (378 aa). A Carrier 2 domain is found at 1563-1643; the sequence is DLETDTQRVL…DLSLAIDELV (81 aa). S1602 carries the O-(pantetheine 4'-phosphoryl)serine modification. Residues 1664–1952 are condensation 2; sequence GQLPLSYLEK…FLDRLLLRIQ (289 aa). Residues 2103-2129 are disordered; it reads PVGLTPSHEGSAELTNGTNKTDSTTGQ. Over residues 2115–2129 the composition is skewed to polar residues; that stretch reads ELTNGTNKTDSTTGQ. Residues 2130-2202 form the Carrier 3 domain; that stretch reads QELENNLTDV…LELATCAVII (73 aa). S2164 carries the post-translational modification O-(pantetheine 4'-phosphoryl)serine.

This sequence belongs to the NRP synthetase family.

Functionally, nonribosomal peptide synthesis (NRPS) is a key mechanism responsible for the biosynthesis of bioactive metabolites which are potentially contributing to organismal virulence. This is Nonribosomal peptide synthetase 5 (NRPS5) from Aspergillus fumigatus (strain ATCC MYA-4609 / CBS 101355 / FGSC A1100 / Af293) (Neosartorya fumigata).